The following is a 500-amino-acid chain: L-arabinose isomerase (500 aa).

Positions 306, 333, 350, and 450 each coordinate Mn(2+).

The protein belongs to the arabinose isomerase family. As to quaternary structure, homohexamer. Requires Mn(2+) as cofactor.

It catalyses the reaction beta-L-arabinopyranose = L-ribulose. Its pathway is carbohydrate degradation; L-arabinose degradation via L-ribulose; D-xylulose 5-phosphate from L-arabinose (bacterial route): step 1/3. Its function is as follows. Catalyzes the conversion of L-arabinose to L-ribulose. This is L-arabinose isomerase from Escherichia coli O157:H7.